A 70-amino-acid polypeptide reads, in one-letter code: uncharacterized protein (70 aa).

The chain crosses the membrane as a helical span at residues 4-24 (VKTIAMLAMLVIVAALIYMGY).

It is found in the host membrane. This is an uncharacterized protein from Dryophytes versicolor (chameleon treefrog).